The sequence spans 891 residues: Translation initiation factor IF-2 (891 aa).

Positions 50–303 are disordered; sequence KKEHGSADES…TSMQHGFDKS (254 aa). Composition is skewed to basic and acidic residues over residues 102–237 and 245–261; these read TLEE…KTAD and HARE…EQQP. The 170-residue stretch at 390-559 folds into the tr-type G domain; the sequence is GRAPVVTIMG…LLQSEVLELT (170 aa). A G1 region spans residues 399 to 406; that stretch reads GHVDHGKT. 399–406 contacts GTP; sequence GHVDHGKT. Positions 424 to 428 are G2; that stretch reads GITQH. Positions 445 to 448 are G3; the sequence is DTPG. GTP contacts are provided by residues 445 to 449 and 499 to 502; these read DTPGH and NKID. Residues 499-502 are G4; sequence NKID. The G5 stretch occupies residues 535–537; sequence SAK.

The protein belongs to the TRAFAC class translation factor GTPase superfamily. Classic translation factor GTPase family. IF-2 subfamily.

The protein localises to the cytoplasm. One of the essential components for the initiation of protein synthesis. Protects formylmethionyl-tRNA from spontaneous hydrolysis and promotes its binding to the 30S ribosomal subunits. Also involved in the hydrolysis of GTP during the formation of the 70S ribosomal complex. This Aliivibrio salmonicida (strain LFI1238) (Vibrio salmonicida (strain LFI1238)) protein is Translation initiation factor IF-2.